A 294-amino-acid chain; its full sequence is Survival motor neuron protein (294 aa).

Residues 1–12 show a composition bias toward gly residues; it reads MAMSSGGSGGGV. The disordered stretch occupies residues 1–32; it reads MAMSSGGSGGGVPEQEDSVLFRRGTGQSDDSD. Ala2 is modified (N-acetylalanine). Phosphoserine; by PKA occurs at positions 4, 5, and 8. Positions 13–44 are P1 (binding site for GEMIN2); it reads PEQEDSVLFRRGTGQSDDSDIWDDTALIKAYD. Thr25 is subject to Phosphothreonine. A phosphoserine mark is found at Ser28 and Ser31. Lys51 is covalently cross-linked (Glycyl lysine isopeptide (Lys-Gly) (interchain with G-Cter in SUMO2)). A disordered region spans residues 58–88; it reads DICETSGKPKTTPKRKPAKKNKSQKKNTAAP. A compositionally biased stretch (basic residues) spans 68–82; sequence TTPKRKPAKKNKSQK. Thr69 is modified (phosphothreonine). At Thr85 the chain carries Phosphothreonine; by PKA. Residues 91 to 151 form the Tudor domain; the sequence is QWKVGDKCSA…LSPISEVANN (61 aa). A required for interaction with RPP20/POP7 region spans residues 97 to 209; it reads KCSAIWSEDG…MPGPRLGPGK (113 aa). The span at 156 to 166 shows a compositional bias: low complexity; that stretch reads AQENENESQVS. Residues 156-222 form a disordered region; that stretch reads AQENENESQV…KFNGPPPPPP (67 aa). The residue at position 187 (Ser187) is a Phosphoserine; by PKA. Residues 194 to 204 show a composition bias toward pro residues; it reads LPPPPPMPGPR. Lys209 participates in a covalent cross-link: Glycyl lysine isopeptide (Lys-Gly) (interchain with G-Cter in SUMO2). The tract at residues 240–267 is P2 (binding site for SM B); sequence PPIIPPPPPICPDSLDDADALGSMLISW. The segment at 279 to 294 is required for interaction with SYNCRIP; the sequence is GFRQNQKEGRCSHSLN.

The protein belongs to the SMN family. Homooligomer; may form higher order homooligomers in the dimer to octamer range. Part of the core SMN complex that contains SMN1, GEMIN2/SIP1, DDX20/GEMIN3, GEMIN4, GEMIN5, GEMIN6, GEMIN7, GEMIN8 and STRAP/UNRIP. Part of the SMN-Sm complex that contains SMN1, GEMIN2/SIP1, DDX20/GEMIN3, GEMIN4, GEMIN5, GEMIN6, GEMIN7, GEMIN8, STRAP/UNRIP and the Sm proteins SNRPB, SNRPD1, SNRPD2, SNRPD3, SNRPE, SNRPF and SNRPG. Component of an import snRNP complex composed of KPNB1, RNUT1, SMN1 and ZNF259. Interacts with DDX20, FBL, NOLA1, RNUT1, SYNCRIP and with several spliceosomal snRNP core Sm proteins, including SNRPB, SNRPD1, SNRPD2, SNRPD3, SNRPE and ILF3. Interacts with GEMIN2; the interaction is direct. Interacts with GEMIN3; the interaction is direct. Interacts with GEMIN8; the interaction is direct. Interacts with SNRPB; the interaction is direct. Interacts (via Tudor domain) with SNRPD1 (via C-terminus); the interaction is direct. Interacts with SNRPD2; the interaction is direct. Interacts (via Tudor domain) with SNRPD3 (via C-terminus); the interaction is direct. Interacts with SNRPE; the interaction is direct. Interacts with OSTF1, LSM10, LSM11 and RPP20/POP7. Interacts (via C-terminal region) with ZPR1 (via C-terminal region). Interacts (via Tudor domain) with COIL. Interacts with SETX; recruits SETX to POLR2A. Interacts with POLR2A (via the C-terminal domain (CTD)). Interacts with PRMT5. Interacts with XRN2. Interacts (via C-terminus) with FMR1 (via C-terminus); the interaction is direct and occurs in a RNA-independent manner. Interacts (via Tudor domain) with SF3B2 ('Arg-508'-methylated form). Interacts with WRAP53/TCAB1. Interacts (via Tudor domain) with ELAVL4 in an RNA-independent manner; the interaction is required for localization of ELAVL4 to RNA granules. Interacts with FRG1.

It localises to the nucleus. The protein resides in the gem. It is found in the cajal body. The protein localises to the cytoplasm. Its subcellular location is the cytoplasmic granule. It localises to the perikaryon. The protein resides in the cell projection. It is found in the neuron projection. The protein localises to the axon. Its subcellular location is the myofibril. It localises to the sarcomere. The protein resides in the z line. In terms of biological role, the SMN complex catalyzes the assembly of small nuclear ribonucleoproteins (snRNPs), the building blocks of the spliceosome, and thereby plays an important role in the splicing of cellular pre-mRNAs. Most spliceosomal snRNPs contain a common set of Sm proteins SNRPB, SNRPD1, SNRPD2, SNRPD3, SNRPE, SNRPF and SNRPG that assemble in a heptameric protein ring on the Sm site of the small nuclear RNA to form the core snRNP (Sm core). In the cytosol, the Sm proteins SNRPD1, SNRPD2, SNRPE, SNRPF and SNRPG are trapped in an inactive 6S pICln-Sm complex by the chaperone CLNS1A that controls the assembly of the core snRNP. To assemble core snRNPs, the SMN complex accepts the trapped 5Sm proteins from CLNS1A forming an intermediate. Binding of snRNA inside 5Sm ultimately triggers eviction of the SMN complex, thereby allowing binding of SNRPD3 and SNRPB to complete assembly of the core snRNP. Within the SMN complex, SMN1 acts as a structural backbone and together with GEMIN2 it gathers the Sm complex subunits. Ensures the correct splicing of U12 intron-containing genes that may be important for normal motor and proprioceptive neurons development. Also required for resolving RNA-DNA hybrids created by RNA polymerase II, that form R-loop in transcription terminal regions, an important step in proper transcription termination. May also play a role in the metabolism of small nucleolar ribonucleoprotein (snoRNPs). This chain is Survival motor neuron protein (SMN1), found in Macaca fascicularis (Crab-eating macaque).